The sequence spans 214 residues: Metalloproteinase inhibitor 3 (214 aa).

A signal peptide spans 1 to 26 (MVFSTTAALSLLLALSSMQLSEVSEA). C27 lines the Zn(2+) pocket. 2 involved in metalloproteinase-binding regions span residues 27–30 (CTCM) and 91–92 (ES). Disulfide bonds link C27-C94, C29-C121, C39-C146, C148-C195, C153-C158, and C166-C187. An NTR domain is found at 27–146 (CTCMPNHPQE…GLNHRYQYGC (120 aa)). A glycan (N-linked (GlcNAc...) asparagine) is linked at N210.

It belongs to the protease inhibitor I35 (TIMP) family. As to expression, expressed abundantly in brain and cartilage.

It localises to the secreted. The protein localises to the extracellular space. It is found in the extracellular matrix. Functionally, complexes with metalloproteinases (such as collagenases) and irreversibly inactivates them by binding to their catalytic zinc cofactor. May form part of a tissue-specific acute response to remodeling stimuli. This Scyliorhinus torazame (Cloudy catshark) protein is Metalloproteinase inhibitor 3 (TIMP3).